Reading from the N-terminus, the 569-residue chain is MFMSSDANACEIDIKPRSRVVTHGIEATTSRGMLRAVGMGDADWEKPQIGIASSWNNITPCNLSLDRLAQGAREGVHAAGGYPLQFCTISVSDGISMGHEGMHFSLVSREVITDSVETVLMAEALDGVVLLAGCDKSLPGMLMAAARLDVSAVFLYAGSIAPGYVTLKCGESKEVTIIDSFEAVGAYKAGLIDQDDLGRIERAICPGEGACGGMYTANTMASVAEALGMSLLGSASPPSADRRRDVYAHKSGEAVVELLKRGITARDILTKEAFENAIAVVMALGGSTNAVLHLLAIAHEAHVPLTIDDFNKIGNRVPHIADLKPFGRYVMNDVDRVGGIPVVINALMREGFIHGDVITVSGRTMAEEISDINPGLPDGKVIHSFSSPLHPTGGIKVLKGTLAPDGAVAKTAGFDTVVFQGPAMVFDRERAAMDALSAGNIKKGSVIVIRYEGPKGGPGMREMLAITAAIKGSGLGKDVLLLTDGRFSGGTTGLCIGHIAPEAVDLGPIAFVQDGDIIRVDIEKSSIDVLVDEKQLRARHLTPPPPRYTSGVLSKYSKLVKSASLGAIT.

Cys-61 serves as a coordination point for [2Fe-2S] cluster. Asp-93 is a Mg(2+) binding site. Cys-134 provides a ligand contact to [2Fe-2S] cluster. Asp-135 and Lys-136 together coordinate Mg(2+). The residue at position 136 (Lys-136) is an N6-carboxylysine. A [2Fe-2S] cluster-binding site is contributed by Cys-211. Glu-462 is a binding site for Mg(2+). Catalysis depends on Ser-488, which acts as the Proton acceptor.

It belongs to the IlvD/Edd family. In terms of assembly, homodimer. It depends on [2Fe-2S] cluster as a cofactor. Mg(2+) is required as a cofactor.

It carries out the reaction (2R)-2,3-dihydroxy-3-methylbutanoate = 3-methyl-2-oxobutanoate + H2O. It catalyses the reaction (2R,3R)-2,3-dihydroxy-3-methylpentanoate = (S)-3-methyl-2-oxopentanoate + H2O. It participates in amino-acid biosynthesis; L-isoleucine biosynthesis; L-isoleucine from 2-oxobutanoate: step 3/4. Its pathway is amino-acid biosynthesis; L-valine biosynthesis; L-valine from pyruvate: step 3/4. Its function is as follows. Functions in the biosynthesis of branched-chain amino acids. Catalyzes the dehydration of (2R,3R)-2,3-dihydroxy-3-methylpentanoate (2,3-dihydroxy-3-methylvalerate) into 2-oxo-3-methylpentanoate (2-oxo-3-methylvalerate) and of (2R)-2,3-dihydroxy-3-methylbutanoate (2,3-dihydroxyisovalerate) into 2-oxo-3-methylbutanoate (2-oxoisovalerate), the penultimate precursor to L-isoleucine and L-valine, respectively. This chain is Dihydroxy-acid dehydratase, found in Tropheryma whipplei (strain TW08/27) (Whipple's bacillus).